Reading from the N-terminus, the 613-residue chain is Dihydroxy-acid dehydratase (613 aa).

Position 81 (D81) interacts with Mg(2+). C122 contacts [2Fe-2S] cluster. Mg(2+) is bound by residues D123 and K124. The residue at position 124 (K124) is an N6-carboxylysine. C195 is a binding site for [2Fe-2S] cluster. Position 491 (E491) interacts with Mg(2+). S517 serves as the catalytic Proton acceptor.

Belongs to the IlvD/Edd family. In terms of assembly, homodimer. [2Fe-2S] cluster is required as a cofactor. It depends on Mg(2+) as a cofactor.

The catalysed reaction is (2R)-2,3-dihydroxy-3-methylbutanoate = 3-methyl-2-oxobutanoate + H2O. The enzyme catalyses (2R,3R)-2,3-dihydroxy-3-methylpentanoate = (S)-3-methyl-2-oxopentanoate + H2O. Its pathway is amino-acid biosynthesis; L-isoleucine biosynthesis; L-isoleucine from 2-oxobutanoate: step 3/4. The protein operates within amino-acid biosynthesis; L-valine biosynthesis; L-valine from pyruvate: step 3/4. Its function is as follows. Functions in the biosynthesis of branched-chain amino acids. Catalyzes the dehydration of (2R,3R)-2,3-dihydroxy-3-methylpentanoate (2,3-dihydroxy-3-methylvalerate) into 2-oxo-3-methylpentanoate (2-oxo-3-methylvalerate) and of (2R)-2,3-dihydroxy-3-methylbutanoate (2,3-dihydroxyisovalerate) into 2-oxo-3-methylbutanoate (2-oxoisovalerate), the penultimate precursor to L-isoleucine and L-valine, respectively. This is Dihydroxy-acid dehydratase from Nitrobacter hamburgensis (strain DSM 10229 / NCIMB 13809 / X14).